Consider the following 316-residue polypeptide: MRHLRALCAIADTGSVRRAARELGVSQPALTTQLRRIEQSLGAELFHRGRDGCRPTLLGRTVLSRARTVVDSMAVLVEEARAEAAALGRPGPRLRVGSTASRIVGDWLRRLRGRMPETDITLQVDVSATVLLRCCAPAALDLAFVHEVEGSPLRVPDGLVQHTLLEREPQFISLAPDHPAAARPVVDLADLAQDRWMVDPSVDGEWDGVRRVLAAAGIDPPVLHGDYLTTASLVALGEAVAPCQPTSGPRDDMVIRPLRDDPLAVRLLLVTPPRCPAAGPAYEELTAAYAAAALRAGPYREWLEGAPERPGALLGG.

The region spanning 1 to 56 (MRHLRALCAIADTGSVRRAARELGVSQPALTTQLRRIEQSLGAELFHRGRDGCRPT) is the HTH lysR-type domain. The segment at residues 16-35 (VRRAARELGVSQPALTTQLR) is a DNA-binding region (H-T-H motif).

The protein belongs to the LysR transcriptional regulatory family.

In terms of biological role, transcriptional trans-activator of the gene (mprA) for the small neutral protease. This Streptomyces coelicolor protein is Small neutral protease regulatory protein (mprR).